The primary structure comprises 344 residues: Acireductone dioxygenase (344 aa).

Residues H92, H94, E98, and H137 each coordinate Fe(2+). Ni(2+) is bound by residues H92, H94, E98, and H137.

It belongs to the acireductone dioxygenase (ARD) family. Fe(2+) is required as a cofactor. Requires Ni(2+) as cofactor.

The protein localises to the cytoplasm. The protein resides in the nucleus. The catalysed reaction is 1,2-dihydroxy-5-(methylsulfanyl)pent-1-en-3-one + O2 = 4-methylsulfanyl-2-oxobutanoate + formate + 2 H(+). It carries out the reaction 1,2-dihydroxy-5-(methylsulfanyl)pent-1-en-3-one + O2 = 3-(methylsulfanyl)propanoate + CO + formate + 2 H(+). The protein operates within amino-acid biosynthesis; L-methionine biosynthesis via salvage pathway; L-methionine from S-methyl-5-thio-alpha-D-ribose 1-phosphate: step 5/6. Its function is as follows. Catalyzes 2 different reactions between oxygen and the acireductone 1,2-dihydroxy-3-keto-5-methylthiopentene (DHK-MTPene) depending upon the metal bound in the active site. Fe-containing acireductone dioxygenase (Fe-ARD) produces formate and 2-keto-4-methylthiobutyrate (KMTB), the alpha-ketoacid precursor of methionine in the methionine recycle pathway. Ni-containing acireductone dioxygenase (Ni-ARD) produces methylthiopropionate, carbon monoxide and formate, and does not lie on the methionine recycle pathway. The polypeptide is Acireductone dioxygenase (Leishmania braziliensis).